A 100-amino-acid chain; its full sequence is Co-chaperonin GroES (100 aa).

Belongs to the GroES chaperonin family. Heptamer of 7 subunits arranged in a ring. Interacts with the chaperonin GroEL.

The protein resides in the cytoplasm. Together with the chaperonin GroEL, plays an essential role in assisting protein folding. The GroEL-GroES system forms a nano-cage that allows encapsulation of the non-native substrate proteins and provides a physical environment optimized to promote and accelerate protein folding. GroES binds to the apical surface of the GroEL ring, thereby capping the opening of the GroEL channel. This Nocardia farcinica (strain IFM 10152) protein is Co-chaperonin GroES.